Here is a 917-residue protein sequence, read N- to C-terminus: DNA mismatch repair protein spellchecker 1 (917 aa).

ATP is bound at residue 667-674 (GPNMGGKS).

The protein belongs to the DNA mismatch repair MutS family. In terms of assembly, heterodimer of Msh2/Spel and Msh6.

It is found in the nucleus. Involved in postreplication mismatch repair. Binds specifically to DNA containing mismatched nucleotides thus providing a target for the excision repair processes characteristic of postreplication mismatch repair. The protein is DNA mismatch repair protein spellchecker 1 (spel1) of Drosophila melanogaster (Fruit fly).